The primary structure comprises 503 residues: Probable mitochondrial-processing peptidase subunit alpha-1, mitochondrial (503 aa).

Residues M1–P59 constitute a mitochondrion transit peptide.

It belongs to the peptidase M16 family. As to quaternary structure, heterodimer of alpha and beta subunits, forming the mitochondrial processing protease (MPP) in which subunit alpha is involved in substrate recognition and binding and subunit beta is the catalytic subunit. Component of the ubiquinol-cytochrome c oxidoreductase (cytochrome b-c1 complex, complex III, CIII), a multisubunit enzyme composed of 10 subunits. The complex is composed of 3 respiratory subunits cytochrome b (MT-CYB), cytochrome c1 (CYC1-1 or CYC1-2) and Rieske protein (UCR1-1 or UCR1-2), 2 core protein subunits MPPalpha1 (or MPPalpha2) and MPPB, and 5 low-molecular weight protein subunits QCR7-1 (or QCR7-2), UCRQ-1 (or UCRQ-2), QCR9, UCRY and probably QCR6-1 (or QCR6-2). The complex exists as an obligatory dimer and forms supercomplexes (SCs) in the inner mitochondrial membrane with NADH-ubiquinone oxidoreductase (complex I, CI), resulting in different assemblies (supercomplexes SCI(1)III(2) and SCI(2)III(4)).

It is found in the mitochondrion matrix. The protein localises to the mitochondrion inner membrane. Substrate recognition and binding subunit of the essential mitochondrial processing protease (MPP), which cleaves the mitochondrial sequence off newly imported precursors proteins. Functionally, component of the ubiquinol-cytochrome c oxidoreductase, a multisubunit transmembrane complex that is part of the mitochondrial electron transport chain which drives oxidative phosphorylation. The respiratory chain contains 3 multisubunit complexes succinate dehydrogenase (complex II, CII), ubiquinol-cytochrome c oxidoreductase (cytochrome b-c1 complex, complex III, CIII) and cytochrome c oxidase (complex IV, CIV), that cooperate to transfer electrons derived from NADH and succinate to molecular oxygen, creating an electrochemical gradient over the inner membrane that drives transmembrane transport and the ATP synthase. The cytochrome b-c1 complex catalyzes electron transfer from ubiquinol to cytochrome c, linking this redox reaction to translocation of protons across the mitochondrial inner membrane, with protons being carried across the membrane as hydrogens on the quinol. In the process called Q cycle, 2 protons are consumed from the matrix, 4 protons are released into the intermembrane space and 2 electrons are passed to cytochrome c. The polypeptide is Probable mitochondrial-processing peptidase subunit alpha-1, mitochondrial (MPPalpha1) (Arabidopsis thaliana (Mouse-ear cress)).